A 236-amino-acid polypeptide reads, in one-letter code: Adenylate dimethylallyltransferase (236 aa).

Belongs to the isopentenyl transferase family.

The enzyme catalyses dimethylallyl diphosphate + AMP = N(6)-(dimethylallyl)adenosine 5'-phosphate + diphosphate. Its function is as follows. Transfers dimethylallyl groups to AMP as part of the biosynthesis of cytokinin phytohormones. This Allorhizobium ampelinum (strain ATCC BAA-846 / DSM 112012 / S4) (Agrobacterium vitis (strain S4)) protein is Adenylate dimethylallyltransferase (ipt).